Reading from the N-terminus, the 349-residue chain is UDP-N-acetylenolpyruvoylglucosamine reductase (349 aa).

One can recognise an FAD-binding PCMH-type domain in the interval 17–187 (VNESADLIIQ…TAITLRLNKQ (171 aa)). Arg-163 is an active-site residue. The Proton donor role is filled by Ser-233. Glu-328 is an active-site residue.

This sequence belongs to the MurB family. It depends on FAD as a cofactor.

The protein localises to the cytoplasm. It catalyses the reaction UDP-N-acetyl-alpha-D-muramate + NADP(+) = UDP-N-acetyl-3-O-(1-carboxyvinyl)-alpha-D-glucosamine + NADPH + H(+). It participates in cell wall biogenesis; peptidoglycan biosynthesis. Functionally, cell wall formation. The polypeptide is UDP-N-acetylenolpyruvoylglucosamine reductase (Aliivibrio fischeri (strain ATCC 700601 / ES114) (Vibrio fischeri)).